The primary structure comprises 192 residues: Xanthine phosphoribosyltransferase (192 aa).

Xanthine contacts are provided by leucine 20 and asparagine 27. A 5-phospho-alpha-D-ribose 1-diphosphate-binding site is contributed by 128–132 (ANGDA). Lysine 156 provides a ligand contact to xanthine.

Belongs to the purine/pyrimidine phosphoribosyltransferase family. Xpt subfamily. In terms of assembly, homodimer.

Its subcellular location is the cytoplasm. It carries out the reaction XMP + diphosphate = xanthine + 5-phospho-alpha-D-ribose 1-diphosphate. The protein operates within purine metabolism; XMP biosynthesis via salvage pathway; XMP from xanthine: step 1/1. Converts the preformed base xanthine, a product of nucleic acid breakdown, to xanthosine 5'-monophosphate (XMP), so it can be reused for RNA or DNA synthesis. The protein is Xanthine phosphoribosyltransferase of Staphylococcus aureus (strain bovine RF122 / ET3-1).